Consider the following 284-residue polypeptide: Nucleotide-binding protein CPS_4546 (284 aa).

8 to 15 is an ATP binding site; it reads GRSGSGKS. GTP is bound at residue 56–59; that stretch reads DVRN.

This sequence belongs to the RapZ-like family.

Its function is as follows. Displays ATPase and GTPase activities. The polypeptide is Nucleotide-binding protein CPS_4546 (Colwellia psychrerythraea (strain 34H / ATCC BAA-681) (Vibrio psychroerythus)).